Here is a 133-residue protein sequence, read N- to C-terminus: MTTAVLEALFAELRFDADGLVPAIAQQHDTGEVLMLAWMNRESIKETLAGGRVVYWSRSRRALWRKGDTSGQIQHLKELRLDCDGDALLLLVDQVGVACHTGRRNCFYRAVRDGTLAVIADVEVPAEELYGKG.

Mg(2+) is bound at residue Asp-82. Residue Cys-83 coordinates Zn(2+). The Mg(2+) site is built by Asp-84 and Asp-86. Zn(2+) contacts are provided by Cys-99 and Cys-106.

This sequence belongs to the PRA-CH family. In terms of assembly, homodimer. It depends on Mg(2+) as a cofactor. Zn(2+) is required as a cofactor.

The protein localises to the cytoplasm. It catalyses the reaction 1-(5-phospho-beta-D-ribosyl)-5'-AMP + H2O = 1-(5-phospho-beta-D-ribosyl)-5-[(5-phospho-beta-D-ribosylamino)methylideneamino]imidazole-4-carboxamide. The protein operates within amino-acid biosynthesis; L-histidine biosynthesis; L-histidine from 5-phospho-alpha-D-ribose 1-diphosphate: step 3/9. Catalyzes the hydrolysis of the adenine ring of phosphoribosyl-AMP. In Rhodospirillum centenum (strain ATCC 51521 / SW), this protein is Phosphoribosyl-AMP cyclohydrolase.